A 133-amino-acid polypeptide reads, in one-letter code: Small ribosomal subunit protein uS9 (133 aa).

Residues 111-133 (PRRSESKKFGGPGARARKQKSYR) are disordered.

Belongs to the universal ribosomal protein uS9 family.

The sequence is that of Small ribosomal subunit protein uS9 from Methanosphaera stadtmanae (strain ATCC 43021 / DSM 3091 / JCM 11832 / MCB-3).